A 450-amino-acid chain; its full sequence is Glucose-6-phosphate isomerase (450 aa).

Phosphothreonine is present on Thr-39. Glu-291 (proton donor) is an active-site residue. Residues His-312 and Lys-426 contribute to the active site.

The protein belongs to the GPI family.

It localises to the cytoplasm. It catalyses the reaction alpha-D-glucose 6-phosphate = beta-D-fructose 6-phosphate. The protein operates within carbohydrate biosynthesis; gluconeogenesis. Its pathway is carbohydrate degradation; glycolysis; D-glyceraldehyde 3-phosphate and glycerone phosphate from D-glucose: step 2/4. Its function is as follows. Catalyzes the reversible isomerization of glucose-6-phosphate to fructose-6-phosphate. This chain is Glucose-6-phosphate isomerase, found in Bacillus anthracis.